Here is a 302-residue protein sequence, read N- to C-terminus: tRNA pseudouridine synthase B (302 aa).

D42 acts as the Nucleophile in catalysis.

This sequence belongs to the pseudouridine synthase TruB family. Type 1 subfamily.

It carries out the reaction uridine(55) in tRNA = pseudouridine(55) in tRNA. Responsible for synthesis of pseudouridine from uracil-55 in the psi GC loop of transfer RNAs. The protein is tRNA pseudouridine synthase B of Leifsonia xyli subsp. xyli (strain CTCB07).